A 390-amino-acid chain; its full sequence is Fluoride export protein 1 (390 aa).

The disordered stretch occupies residues methionine 1 to glutamine 22. Residues methionine 1 to tyrosine 72 are Cytoplasmic-facing. The helical transmembrane segment at proline 73–methionine 93 threads the bilayer. Topologically, residues serine 94–glycine 100 are extracellular. A helical membrane pass occupies residues serine 101–isoleucine 121. At aspartate 122–proline 143 the chain is on the cytoplasmic side. The helical transmembrane segment at valine 144–leucine 164 threads the bilayer. Residues glutamate 165–alanine 185 are Extracellular-facing. Residues tyrosine 186 to phenylalanine 206 form a helical membrane-spanning segment. Residues histidine 207–lysine 229 lie on the Cytoplasmic side of the membrane. Residues valine 230 to isoleucine 250 traverse the membrane as a helical segment. The Extracellular segment spans residues glycine 251–glycine 256. The chain crosses the membrane as a helical span at residues serine 257–serine 279. At lysine 280 to proline 290 the chain is on the cytoplasmic side. The helical transmembrane segment at leucine 291–alanine 311 threads the bilayer. The Extracellular portion of the chain corresponds to arginine 312 to glycine 338. The helical transmembrane segment at phenylalanine 339–leucine 359 threads the bilayer. Over phenylalanine 360–serine 368 the chain is Cytoplasmic. The chain crosses the membrane as a helical span at residues isoleucine 369–leucine 389. Position 390 (aspartate 390) is a topological domain, extracellular.

It belongs to the fluoride channel Fluc/FEX (TC 1.A.43) family.

The protein resides in the cell membrane. The enzyme catalyses fluoride(in) = fluoride(out). Its function is as follows. Fluoride channel required for the rapid expulsion of cytoplasmic fluoride. This is Fluoride export protein 1 from Candida albicans (strain SC5314 / ATCC MYA-2876) (Yeast).